Here is a 408-residue protein sequence, read N- to C-terminus: Peptidase T (408 aa).

Zn(2+) is bound at residue H78. Residue D80 is part of the active site. D141 is a Zn(2+) binding site. Catalysis depends on E175, which acts as the Proton acceptor. E176, D198, and H380 together coordinate Zn(2+).

Belongs to the peptidase M20B family. Requires Zn(2+) as cofactor.

The protein resides in the cytoplasm. It carries out the reaction Release of the N-terminal residue from a tripeptide.. Functionally, cleaves the N-terminal amino acid of tripeptides. In Clostridium botulinum (strain Langeland / NCTC 10281 / Type F), this protein is Peptidase T.